The chain runs to 347 residues: Protein RecA (347 aa).

Gly66–Thr73 lines the ATP pocket.

It belongs to the RecA family.

It localises to the cytoplasm. Its function is as follows. Can catalyze the hydrolysis of ATP in the presence of single-stranded DNA, the ATP-dependent uptake of single-stranded DNA by duplex DNA, and the ATP-dependent hybridization of homologous single-stranded DNAs. It interacts with LexA causing its activation and leading to its autocatalytic cleavage. This is Protein RecA from Methylococcus capsulatus (strain ATCC 33009 / NCIMB 11132 / Bath).